We begin with the raw amino-acid sequence, 377 residues long: MPSAVQLAEKNHEKDSKFAKALHGESYKQTGLKALMSKARDASEVANDGYFKHWDGGVTKEDEDKRLSDYSNLTAHYYNLVTDFYEYGWGSSFHFSRYYTGEAFRQATARHEHFLAHKMQINENMKVLDVGCGVGGPAREICRFTDCSIVGLNNNDYQIERANHYARKYKLDDKLSFVKGDFMQMDFEAESFDAVYAIEATVHAPVLEGVYSEIYKVLKPGGVFGVYEWVMTDKYDDENEEHRKIAYGIEVGDGIPKMYKREVAEKALKSVGFEIEYEADLADKEDDIPWYYPLSGEWKYVQTLSDYFTIFRTSKVGRTITTEAVGLMEKLGLAPKGSKQVTNALEDAAVNLVEGGRQKLFTPMMLYVCRKPANEDI.

Belongs to the class I-like SAM-binding methyltransferase superfamily. Erg6/SMT family.

The catalysed reaction is zymosterol + S-adenosyl-L-methionine = fecosterol + S-adenosyl-L-homocysteine + H(+). Its pathway is steroid metabolism; ergosterol biosynthesis; ergosterol from zymosterol: step 1/5. Catalyzes the methyl transfer from S-adenosyl-methionine to the C-24 of zymosterol to form fecosterol. The chain is Sterol 24-C-methyltransferase (ERG6) from Debaryomyces hansenii (strain ATCC 36239 / CBS 767 / BCRC 21394 / JCM 1990 / NBRC 0083 / IGC 2968) (Yeast).